The following is an 82-amino-acid chain: uncharacterized protein (82 aa).

It belongs to the chlamydial CPn_0710/CT_666/TC_0037 family.

This is an uncharacterized protein from Chlamydia muridarum (strain MoPn / Nigg).